The chain runs to 258 residues: Ubiquinone/menaquinone biosynthesis C-methyltransferase UbiE (258 aa).

The disordered stretch occupies residues 1 to 20 (MSESRTSADGGMETSYGFRE). S-adenosyl-L-methionine-binding positions include Thr81, Asp102, and 130–131 (NA).

The protein belongs to the class I-like SAM-binding methyltransferase superfamily. MenG/UbiE family.

It catalyses the reaction a 2-demethylmenaquinol + S-adenosyl-L-methionine = a menaquinol + S-adenosyl-L-homocysteine + H(+). The enzyme catalyses a 2-methoxy-6-(all-trans-polyprenyl)benzene-1,4-diol + S-adenosyl-L-methionine = a 5-methoxy-2-methyl-3-(all-trans-polyprenyl)benzene-1,4-diol + S-adenosyl-L-homocysteine + H(+). Its pathway is quinol/quinone metabolism; menaquinone biosynthesis; menaquinol from 1,4-dihydroxy-2-naphthoate: step 2/2. It functions in the pathway cofactor biosynthesis; ubiquinone biosynthesis. Functionally, methyltransferase required for the conversion of demethylmenaquinol (DMKH2) to menaquinol (MKH2) and the conversion of 2-polyprenyl-6-methoxy-1,4-benzoquinol (DDMQH2) to 2-polyprenyl-3-methyl-6-methoxy-1,4-benzoquinol (DMQH2). The polypeptide is Ubiquinone/menaquinone biosynthesis C-methyltransferase UbiE (Rhizobium etli (strain CIAT 652)).